The primary structure comprises 237 residues: KH homology domain-containing protein 1 (237 aa).

A run of 2 helical transmembrane segments spans residues Arg7 to Gly29 and Leu33 to Ile50. The KH; atypical domain occupies Pro96–Leu155.

Belongs to the KHDC1 family.

It is found in the membrane. This is KH homology domain-containing protein 1 from Homo sapiens (Human).